The primary structure comprises 357 residues: Trans-enoyl reductase resD (357 aa).

Tyr-211 lines the NADP(+) pocket.

Belongs to the zinc-containing alcohol dehydrogenase family.

It participates in antifungal biosynthesis. Functionally, trans-enoyl reductase; part of the gene cluster that mediates the biosynthesis of the tetrahydropyranyl antifungal agent restricticin that acts as an inhibitor of CYP51 and blocks the ergosterol biosynthesis. The highly reducing polyketide synthase resH, the short chain dehydrogenase resG, the cyclase resF, the FAD-dependent monooxygenase resA and the enoylreductase resD are required to generate the first stable intermediate desmethylrestrictinol. ResH with resD biosynthesize the first polyketide chain intermediate that is reduced by resG, followed by epoxidation by resA before 6-endo cyclization via epoxide opening by resF leads to desmethylrestrictinol. The methyltransferase resE then catalyzes the C4 O-methylation of desmethylrestrictinol to produce restrictinol, and the nonribosomal peptide synthetase resC catalyzes the C3 esterification of restrictinol with glycine that leads to restricticin. The protein is Trans-enoyl reductase resD of Aspergillus sclerotiorum.